A 225-amino-acid chain; its full sequence is tRNA 2'-phosphotransferase 1 (225 aa).

The disordered stretch occupies residues 1–21; sequence MDCETRGRGRRGRGNRNEESR.

The protein belongs to the KptA/TPT1 family.

The catalysed reaction is 2'-phospho-[ligated tRNA] + NAD(+) = mature tRNA + ADP-alpha-D-ribose 1'',2''-cyclic phosphate + nicotinamide. Functionally, catalyzes the last step of tRNA splicing, the transfer of the splice junction 2'-phosphate from ligated tRNA to NAD to produce ADP-ribose 1''-2'' cyclic phosphate. The protein is tRNA 2'-phosphotransferase 1 (trpt1) of Danio rerio (Zebrafish).